A 331-amino-acid polypeptide reads, in one-letter code: MKVYAAPFEKFVNLADARLGTRILSVTDDWFADANRLFQPTPAVWKEGVFDDNGKWMDGWESRRKRFEGYDSAVIRLGVAGTIKGVDIDTSFFTGNFPPSASLEACFLASGEPDENTAWTEVLPSVELQGNSHHYHEINNDQAFSHLRFNIYPDGGVARLRVYGVPHRDWSKVSADEQIDLVAALNGGRSIACSDEHYGSMSNILNPGRGVNMGDGWETARRRTPGNDWVIVALGHKGEVEKVIVDTLHFKGNYPDSCSIQGALVKGGTDSQIETQSLFWRELLPSQKLTMHAEHEFAEQIKAIGPITHIRLNVFPDGGVSRLRVLGKVAR.

This sequence belongs to the allantoicase family.

The catalysed reaction is allantoate + H2O = (S)-ureidoglycolate + urea. It participates in nitrogen metabolism; (S)-allantoin degradation; (S)-ureidoglycolate from allantoate (aminidohydrolase route): step 1/1. In Pseudomonas syringae pv. syringae (strain B728a), this protein is Probable allantoicase.